We begin with the raw amino-acid sequence, 306 residues long: RNA pseudouridylate synthase domain-containing protein 1 (306 aa).

Residue Met1 is modified to N-acetylmethionine. The active site involves Asp67. A disordered region spans residues Arg255 to Arg290. Positions Pro269–Glu285 are enriched in pro residues.

This sequence belongs to the pseudouridine synthase RluA family.

The polypeptide is RNA pseudouridylate synthase domain-containing protein 1 (Rpusd1) (Mus musculus (Mouse)).